Reading from the N-terminus, the 349-residue chain is Phenylalanine--tRNA ligase alpha subunit (349 aa).

Residue E262 coordinates Mg(2+).

Belongs to the class-II aminoacyl-tRNA synthetase family. Phe-tRNA synthetase alpha subunit type 1 subfamily. In terms of assembly, tetramer of two alpha and two beta subunits. Requires Mg(2+) as cofactor.

The protein localises to the cytoplasm. It carries out the reaction tRNA(Phe) + L-phenylalanine + ATP = L-phenylalanyl-tRNA(Phe) + AMP + diphosphate + H(+). This chain is Phenylalanine--tRNA ligase alpha subunit, found in Sorangium cellulosum (strain So ce56) (Polyangium cellulosum (strain So ce56)).